Consider the following 306-residue polypeptide: Ectoine dioxygenase (306 aa).

Residue Gln127 participates in L-ectoine binding. Residue Lys133 participates in 2-oxoglutarate binding. Residues His144, Asp146, and His245 each coordinate Fe cation.

The protein belongs to the PhyH family. EctD subfamily. In terms of assembly, homodimer. The cofactor is Fe(2+).

The catalysed reaction is L-ectoine + 2-oxoglutarate + O2 = 5-hydroxyectoine + succinate + CO2. Its function is as follows. Involved in the biosynthesis of 5-hydroxyectoine, called compatible solute, which helps organisms to survive extreme osmotic stress by acting as a highly soluble organic osmolyte. Catalyzes the 2-oxoglutarate-dependent selective hydroxylation of L-ectoine to yield (4S,5S)-5-hydroxyectoine. This chain is Ectoine dioxygenase, found in Sphingopyxis alaskensis (strain DSM 13593 / LMG 18877 / RB2256) (Sphingomonas alaskensis).